Here is a 397-residue protein sequence, read N- to C-terminus: S-adenosylmethionine synthase (397 aa).

ATP is bound at residue H15. D17 contributes to the Mg(2+) binding site. E43 provides a ligand contact to K(+). E56 and Q99 together coordinate L-methionine. The interval 99 to 109 is flexible loop; sequence QSGDIAMGVDE. ATP contacts are provided by residues 175-177, 241-242, D250, 256-257, A273, and K277; these read DGK, RF, and RK. D250 lines the L-methionine pocket. Residue K281 participates in L-methionine binding.

The protein belongs to the AdoMet synthase family. In terms of assembly, homotetramer; dimer of dimers. Mg(2+) is required as a cofactor. The cofactor is K(+).

The protein resides in the cytoplasm. The enzyme catalyses L-methionine + ATP + H2O = S-adenosyl-L-methionine + phosphate + diphosphate. It participates in amino-acid biosynthesis; S-adenosyl-L-methionine biosynthesis; S-adenosyl-L-methionine from L-methionine: step 1/1. In terms of biological role, catalyzes the formation of S-adenosylmethionine (AdoMet) from methionine and ATP. The overall synthetic reaction is composed of two sequential steps, AdoMet formation and the subsequent tripolyphosphate hydrolysis which occurs prior to release of AdoMet from the enzyme. The polypeptide is S-adenosylmethionine synthase (Clostridioides difficile (strain 630) (Peptoclostridium difficile)).